A 256-amino-acid chain; its full sequence is Ribosomal RNA small subunit methyltransferase A (256 aa).

S-adenosyl-L-methionine-binding residues include Asn-12, Leu-14, Gly-39, Glu-60, Asp-85, and Asn-103.

It belongs to the class I-like SAM-binding methyltransferase superfamily. rRNA adenine N(6)-methyltransferase family. RsmA subfamily.

The protein localises to the cytoplasm. The catalysed reaction is adenosine(1518)/adenosine(1519) in 16S rRNA + 4 S-adenosyl-L-methionine = N(6)-dimethyladenosine(1518)/N(6)-dimethyladenosine(1519) in 16S rRNA + 4 S-adenosyl-L-homocysteine + 4 H(+). Its function is as follows. Specifically dimethylates two adjacent adenosines (A1518 and A1519) in the loop of a conserved hairpin near the 3'-end of 16S rRNA in the 30S particle. May play a critical role in biogenesis of 30S subunits. The chain is Ribosomal RNA small subunit methyltransferase A from Legionella pneumophila subsp. pneumophila (strain Philadelphia 1 / ATCC 33152 / DSM 7513).